Consider the following 182-residue polypeptide: ATP synthase subunit delta (182 aa).

The protein belongs to the ATPase delta chain family. F-type ATPases have 2 components, F(1) - the catalytic core - and F(0) - the membrane proton channel. F(1) has five subunits: alpha(3), beta(3), gamma(1), delta(1), epsilon(1). CF(0) has four main subunits: a(1), b(1), b'(1) and c(10-14). The alpha and beta chains form an alternating ring which encloses part of the gamma chain. F(1) is attached to F(0) by a central stalk formed by the gamma and epsilon chains, while a peripheral stalk is formed by the delta, b and b' chains.

The protein localises to the cellular thylakoid membrane. In terms of biological role, f(1)F(0) ATP synthase produces ATP from ADP in the presence of a proton or sodium gradient. F-type ATPases consist of two structural domains, F(1) containing the extramembraneous catalytic core and F(0) containing the membrane proton channel, linked together by a central stalk and a peripheral stalk. During catalysis, ATP synthesis in the catalytic domain of F(1) is coupled via a rotary mechanism of the central stalk subunits to proton translocation. Functionally, this protein is part of the stalk that links CF(0) to CF(1). It either transmits conformational changes from CF(0) to CF(1) or is implicated in proton conduction. The polypeptide is ATP synthase subunit delta (Synechococcus sp. (strain CC9605)).